The following is a 909-amino-acid chain: SCY1-like protein 2 B (909 aa).

In terms of domain architecture, Protein kinase spans 39-343 (YELLDQIGSA…ALDFTGSNFF (305 aa)). 7 HEAT repeats span residues 311 to 348 (SIPS…SDAR), 350 to 382 (RALR…DFDS), 383 to 401 (RVLR…RNLV), 402 to 439 (LQPI…TASG), 465 to 502 (VLPL…VVRQ), 499 to 537 (VVRQ…TLDK), and 578 to 617 (FTAE…KIEE). Disordered stretches follow at residues 624–772 (NDSG…VAST) and 804–909 (SASL…LDLL). 5 stretches are compositionally biased toward polar residues: residues 638-648 (NGLQFQSSTQI), 678-712 (PASS…TAPT), 724-747 (RQSS…TSFA), 804-828 (SASL…QDPL), and 835-852 (KQSQ…NNQK).

It belongs to the protein kinase superfamily. In terms of assembly, interacts with VTI11, VTI12 and CHC1. In terms of tissue distribution, expressed in roots, seedlings, leaves, stems, flowers, and, at low levels, in siliques.

The protein resides in the golgi apparatus membrane. The protein localises to the golgi apparatus. Its subcellular location is the trans-Golgi network membrane. It is found in the prevacuolar compartment membrane. Probably inactive kinase. Component of the AP2-containing clathrin coat that regulates clathrin-dependent trafficking at plasma membrane, TGN and endosomal system. Together with SCYL2B, required for cell growth, plant growth and development. Essential for polarized root hair development probably by mediating the root hair tip localization of cellulose synthase-like D3 (CSLD3). The polypeptide is SCY1-like protein 2 B (Arabidopsis thaliana (Mouse-ear cress)).